A 234-amino-acid polypeptide reads, in one-letter code: Sugar fermentation stimulation protein A (234 aa).

Residues 201 to 220 constitute a DNA-binding region (H-T-H motif); it reads LLSEAQQRGVEILAYKAEIS.

The protein belongs to the SfsA family.

Its function is as follows. Binds to DNA non-specifically. Could be a regulatory factor involved in maltose metabolism. The polypeptide is Sugar fermentation stimulation protein A (Shigella flexneri serotype 5b (strain 8401)).